Here is a 566-residue protein sequence, read N- to C-terminus: Urease subunit alpha (566 aa).

Residues 129–566 (GGVDTHIHFI…LPLAQRYFLF (438 aa)) enclose the Urease domain. Residues His134, His136, and Lys217 each contribute to the Ni(2+) site. Lys217 carries the N6-carboxylysine modification. His219 serves as a coordination point for substrate. Positions 246 and 272 each coordinate Ni(2+). His320 serves as the catalytic Proton donor. Asp360 is a binding site for Ni(2+).

Belongs to the metallo-dependent hydrolases superfamily. Urease alpha subunit family. Heterotrimer of UreA (gamma), UreB (beta) and UreC (alpha) subunits. Three heterotrimers associate to form the active enzyme. Ni cation is required as a cofactor. In terms of processing, carboxylation allows a single lysine to coordinate two nickel ions.

It localises to the cytoplasm. It carries out the reaction urea + 2 H2O + H(+) = hydrogencarbonate + 2 NH4(+). It functions in the pathway nitrogen metabolism; urea degradation; CO(2) and NH(3) from urea (urease route): step 1/1. The polypeptide is Urease subunit alpha (Janthinobacterium sp. (strain Marseille) (Minibacterium massiliensis)).